The chain runs to 299 residues: Taste receptor type 2 member 5 (299 aa).

Position 1 (M1) is a topological domain, extracellular. Residues 2–22 (LSAGLGLLMLVAVVEFLIGLI) traverse the membrane as a helical segment. Over 23–45 (GNGVLVVWSFREWIRKFSWSSYN) the chain is Cytoplasmic. The chain crosses the membrane as a helical span at residues 46–66 (LIILGLAGCRFVLQWLIILDL). The Extracellular segment spans residues 67-82 (SLFPLFQSSRWLRYLS). Residues 83–103 (IFWVLVSQASLWFATFLSVFY) form a helical membrane-spanning segment. The Cytoplasmic segment spans residues 104 to 127 (CKKITTFDHPAYLWLKQRAYNLSL). The chain crosses the membrane as a helical span at residues 128 to 148 (WCLLGYFIINLLLTVQIGLMF). The Extracellular portion of the chain corresponds to 149–175 (YHPPQGNSSIRYPFESWQYLYAFRLNS). An N-linked (GlcNAc...) asparagine glycan is attached at N155. The helical transmembrane segment at 176–196 (GSYLPLMVFLVSSGMLIVSLY) threads the bilayer. At 197-223 (THHKKMKVHSAGRRDVRAKAHITALKS) the chain is on the cytoplasmic side. A helical membrane pass occupies residues 224–244 (LGCFLLLHLVYIMASPFSIAS). Residues 245-253 (KTYPPDLTS) lie on the Extracellular side of the membrane. Residues 254–274 (VFIWETLMAAYPSLHSLILIM) traverse the membrane as a helical segment. The Cytoplasmic segment spans residues 275-299 (GIPRVKQTCQKILWKTVCARRCWGP).

This sequence belongs to the G-protein coupled receptor T2R family.

Its subcellular location is the membrane. Functionally, receptor that may play a role in the perception of bitterness and is gustducin-linked. May play a role in sensing the chemical composition of the gastrointestinal content. The activity of this receptor may stimulate alpha gustducin, mediate PLC-beta-2 activation and lead to the gating of TRPM5. In Pan paniscus (Pygmy chimpanzee), this protein is Taste receptor type 2 member 5 (TAS2R5).